The sequence spans 935 residues: Myocardin (935 aa).

The MEF2C-binding motif lies at Ile-12–Arg-27. RPEL repeat units follow at residues Ser-18–Lys-43, Asp-62–Thr-87, and Asp-106–Ser-131. A disordered region spans residues Gly-37 to Asp-73. A compositionally biased stretch (basic and acidic residues) spans Thr-46–Asp-73. An HDAC5-binding region spans residues Phe-153–Ser-201. The segment at Asp-155 to Ala-283 is disordered. Polar residues-rich tracts occupy residues Pro-172–Ile-182 and Ala-206–Pro-216. The segment covering Asn-244–Tyr-261 has biased composition (basic residues). Residues Gln-287–Phe-322 adopt a coiled-coil conformation. The interval Glu-337–Pro-378 is disordered. Residues Asn-342–Pro-357 are compositionally biased toward low complexity. Polar residues predominate over residues Val-358–Ser-369. The SAP domain occupies Leu-380–Gln-414. Residues Ser-454, Ser-458, Ser-462, and Ser-466 each carry the phosphoserine; by GSK3-beta modification. The segment at Glu-498–Ser-518 is disordered. Positions Glu-519 to Lys-563 form a coiled coil. Residues Ser-579–Thr-605 form a disordered region. The segment covering Gln-585–Asp-597 has biased composition (polar residues). Ser-624, Ser-628, Ser-632, and Ser-636 each carry phosphoserine; by GSK3-beta. The segment at Asn-654–Ser-731 is disordered. Positions Ala-660–Asp-691 are enriched in polar residues. Low complexity predominate over residues Pro-695–Ser-709. The required for interaction with and ubiquitination by STUB1 stretch occupies residues Ile-714 to Trp-935. Residues Ser-812, Ser-859, and Ser-866 each carry the phosphoserine; by MAPK1 and MAPK3 modification. The residue at position 893 (Thr-893) is a Phosphothreonine; by MAPK1 and MAPK3.

In terms of assembly, homodimer. Interacts with MLLT7/FOXO4. Interacts with SRF, its association does not depend on specific DNA sequences for ternary complex formation. Interacts (via C-terminal) with EP300 (via CREB-binding domain). Interacts with HDAC4 and HDAC5. Interacts with MEF2C. Interacts (via C-terminus) with STUB1/CHIP. Interacts with PURB. Post-translationally, ubiquitinated; by STUB1/CHIP at the C-terminus, leading to its degradation by the proteasome. Phosphorylation by GSK3B is required for STUB1/CHIP-mediated ubiquitination. In terms of processing, phosphorylation negatively regulates transcriptional activity. Phosphorylated; by GSK3B. Expressed in smooth muscle cell-containing tissues. Expressed in the heart. Expressed in the aorta and bladder. Weakly expression in the lung, testis and kidney. Weakly expressed in the stomach. Weakly expressed in the intestine and colon. As to expression, expressed in the heart. In terms of tissue distribution, predominantly expressed in cardiac muscle. Predominantly expressed in smooth muscle cell-rich tissues.

It is found in the nucleus speckle. Functionally, smooth muscle cells (SM) and cardiac muscle cells-specific transcriptional factor which uses the canonical single or multiple CArG boxes DNA sequence. Acts as a cofactor of serum response factor (SRF) with the potential to modulate SRF-target genes. Plays a crucial role in cardiogenesis, urinary bladder development, and differentiation of the smooth muscle cell lineage (myogenesis). Positively regulates the transcription of genes involved in vascular smooth muscle contraction. In terms of biological role, positively regulates the activation of smooth muscle cell gene promoter regions. Positively regulates the activation of smooth muscle cell gene promoter regions. Activation of the MYH6 promoter is enhanced in the presence of MEF2C. The protein is Myocardin (Myocd) of Mus musculus (Mouse).